The following is a 111-amino-acid chain: Small ribosomal subunit protein bS16 (111 aa).

It belongs to the bacterial ribosomal protein bS16 family.

The chain is Small ribosomal subunit protein bS16 from Rickettsia felis (strain ATCC VR-1525 / URRWXCal2) (Rickettsia azadi).